Reading from the N-terminus, the 94-residue chain is Acylphosphatase (94 aa).

Residues 5-94 (RLTAFVHGHV…PRDVEGFVER (90 aa)) enclose the Acylphosphatase-like domain. Residues Arg20 and Asn38 contribute to the active site.

It belongs to the acylphosphatase family.

It carries out the reaction an acyl phosphate + H2O = a carboxylate + phosphate + H(+). This chain is Acylphosphatase (acyP), found in Corynebacterium glutamicum (strain ATCC 13032 / DSM 20300 / JCM 1318 / BCRC 11384 / CCUG 27702 / LMG 3730 / NBRC 12168 / NCIMB 10025 / NRRL B-2784 / 534).